The chain runs to 150 residues: MNVILLDKIANLGNLGDQVAVKAGYARNFLLPQGKAVVANAANTEVFEARRAELEAKLAADLAVATERADKINALESVVIASKAGDEGKLFGSIGNRDIADAVTAAGVELAKSEVRLPLGALRTTGEFEVEVQVHTEVKAIVKLSVVAED.

It belongs to the bacterial ribosomal protein bL9 family.

Its function is as follows. Binds to the 23S rRNA. The chain is Large ribosomal subunit protein bL9 from Shewanella woodyi (strain ATCC 51908 / MS32).